The sequence spans 390 residues: GTPase Obg (390 aa).

Residues 1–159 (MKFVDEATIK…RELRLELLLL (159 aa)) form the Obg domain. The OBG-type G domain maps to 160–333 (ADVGMLGLPN…LCDELADFMD (174 aa)). Residues 166 to 173 (GLPNAGKS), 191 to 195 (FTTLI), 213 to 216 (DIPG), 283 to 286 (NKTD), and 314 to 316 (AAV) each bind GTP. Ser173 and Thr193 together coordinate Mg(2+).

This sequence belongs to the TRAFAC class OBG-HflX-like GTPase superfamily. OBG GTPase family. Monomer. Mg(2+) serves as cofactor.

The protein resides in the cytoplasm. An essential GTPase which binds GTP, GDP and possibly (p)ppGpp with moderate affinity, with high nucleotide exchange rates and a fairly low GTP hydrolysis rate. Plays a role in control of the cell cycle, stress response, ribosome biogenesis and in those bacteria that undergo differentiation, in morphogenesis control. The polypeptide is GTPase Obg (Aliivibrio fischeri (strain ATCC 700601 / ES114) (Vibrio fischeri)).